The sequence spans 162 residues: MPDTTNPIGFTDANELREKNRATVEKYMNTKGQDRLRRHELFVEDGCGGLWTTDTGSPIVIRGKDKLAEHAVWSLKCFPDWEWYNINIFGTDDPNHFWVECDGHGKILFPGYPEGYYENHFLHSFELEDGKIKRNREFMNVFQQLRALSIPVPQIKREGIPT.

This sequence belongs to the PhzA/PhzB family. In terms of assembly, homodimer.

It participates in antibiotic biosynthesis; phenazine biosynthesis. Functionally, involved in the biosynthesis of the antibiotic phenazine, a nitrogen-containing heterocyclic molecule. PhzB1 (operon phzA1B1C1E1F1G1) has a role in the biosynthesis of the phenazine during planktonic growth. This is Phenazine biosynthesis protein PhzB1 from Pseudomonas aeruginosa (strain ATCC 15692 / DSM 22644 / CIP 104116 / JCM 14847 / LMG 12228 / 1C / PRS 101 / PAO1).